Reading from the N-terminus, the 309-residue chain is WD repeat domain phosphoinositide-interacting protein 4 (309 aa).

The stretch at 4-42 is one WD 1 repeat; the sequence is QPLRGVTSLHFNQDQSCFCCAMETGVRIYNVEPLMEKGH. Positions 180–183 match the L/FRRG motif motif; the sequence is LRRG. The stretch at 184 to 223 is one WD 2 repeat; sequence TDPATLYCINFSHDSSFLCASSDKGTVHIFALKDTRLNRR.

It belongs to the WD repeat PROPPIN family. In terms of assembly, interacts with WIPI1. Interacts with WIPI2. Interacts with ATG2A and ATG2B. Interacts with ULK1. May interact with the PRKAA1, PRKAA2, PRKAB1 and PRKAG1 subunits of the AMPK kinase. May interact with NUDC.

The protein localises to the preautophagosomal structure. The protein resides in the cytoplasm. Its function is as follows. Component of the autophagy machinery that controls the major intracellular degradation process by which cytoplasmic materials are packaged into autophagosomes and delivered to lysosomes for degradation. Binds phosphatidylinositol 3-phosphate (PtdIns3P). Activated by the STK11/AMPK signaling pathway upon starvation, WDR45 is involved in autophagosome assembly downstream of WIPI2, regulating the size of forming autophagosomes. Together with WIPI1, promotes ATG2 (ATG2A or ATG2B)-mediated lipid transfer by enhancing ATG2-association with phosphatidylinositol 3-monophosphate (PI3P)-containing membranes. Probably recruited to membranes through its PtdIns3P activity. The chain is WD repeat domain phosphoinositide-interacting protein 4 (Wdr45) from Rattus norvegicus (Rat).